The sequence spans 424 residues: Carbohydrate sulfotransferase 8 (424 aa).

At 1–10 (MTLRPGTMRL) the chain is on the cytoplasmic side. The chain crosses the membrane as a helical; Signal-anchor for type II membrane protein span at residues 11-31 (ACMFSSILLFGAAGLLLFISL). At 32-424 (QDPTELAPQQ…NYSKPFADLY (393 aa)) the chain is on the lumenal side. Residues 47 to 107 (FNIRPRQPHH…PLQRGTRLRL (61 aa)) form a disordered region. Residues 66-77 (GDLKEPTERVTR) are compositionally biased toward basic and acidic residues. Asparagine 128 is a glycosylation site (N-linked (GlcNAc...) asparagine). 3'-phosphoadenylyl sulfate contacts are provided by residues 198–204 (PKAGCSN) and 258–266 (REPFERLVS). 3 N-linked (GlcNAc...) asparagine glycosylation sites follow: asparagine 294, asparagine 367, and asparagine 415.

It belongs to the sulfotransferase 2 family. Predominantly expressed in pituitary gland. In brain, it is expressed in pituitary gland, cerebellum, medulla oblongata, pons, thalamus and spinal cord. Expressed in the epidermis. Expressed at lower level in lung, spleen, adrenal gland, placenta, prostate, testis, mammary gland and trachea.

Its subcellular location is the golgi apparatus membrane. Its function is as follows. Catalyzes the transfer of sulfate to position 4 of non-reducing N-acetylgalactosamine (GalNAc) residues in both N-glycans and O-glycans. Required for biosynthesis of glycoprotein hormones lutropin and thyrotropin, by mediating sulfation of their carbohydrate structures. Only active against terminal GalNAcbeta1,GalNAcbeta. Not active toward chondroitin. In Homo sapiens (Human), this protein is Carbohydrate sulfotransferase 8 (CHST8).